The primary structure comprises 873 residues: Leucine--tRNA ligase (873 aa).

The short motif at 41-51 is the 'HIGH' region element; the sequence is PYPSGRIHMGH. Residues 645–649 carry the 'KMSKS' region motif; that stretch reads KMSKS. Lys648 is a binding site for ATP.

It belongs to the class-I aminoacyl-tRNA synthetase family.

The protein localises to the cytoplasm. The enzyme catalyses tRNA(Leu) + L-leucine + ATP = L-leucyl-tRNA(Leu) + AMP + diphosphate. The protein is Leucine--tRNA ligase of Cereibacter sphaeroides (strain ATCC 17025 / ATH 2.4.3) (Rhodobacter sphaeroides).